Consider the following 342-residue polypeptide: Holliday junction branch migration complex subunit RuvB (342 aa).

The segment at 1–179 (MTNILSPEKS…FGIPMRLNFY (179 aa)) is large ATPase domain (RuvB-L). ATP is bound by residues Ile-18, Arg-19, Gly-60, Lys-63, Thr-64, Thr-65, 126-128 (EDF), Arg-169, Tyr-179, and Arg-216. Residue Thr-64 participates in Mg(2+) binding. Residues 180-250 (NTEELKKVLN…ISDFGLKRLE (71 aa)) are small ATPAse domain (RuvB-S). The segment at 253–342 (RIGLDSNDYR…HQFNIFNENE (90 aa)) is head domain (RuvB-H). Residues Arg-289, Arg-308, and Arg-313 each contribute to the DNA site.

Belongs to the RuvB family. Homohexamer. Forms an RuvA(8)-RuvB(12)-Holliday junction (HJ) complex. HJ DNA is sandwiched between 2 RuvA tetramers; dsDNA enters through RuvA and exits via RuvB. An RuvB hexamer assembles on each DNA strand where it exits the tetramer. Each RuvB hexamer is contacted by two RuvA subunits (via domain III) on 2 adjacent RuvB subunits; this complex drives branch migration. In the full resolvosome a probable DNA-RuvA(4)-RuvB(12)-RuvC(2) complex forms which resolves the HJ.

The protein resides in the cytoplasm. It carries out the reaction ATP + H2O = ADP + phosphate + H(+). The RuvA-RuvB-RuvC complex processes Holliday junction (HJ) DNA during genetic recombination and DNA repair, while the RuvA-RuvB complex plays an important role in the rescue of blocked DNA replication forks via replication fork reversal (RFR). RuvA specifically binds to HJ cruciform DNA, conferring on it an open structure. The RuvB hexamer acts as an ATP-dependent pump, pulling dsDNA into and through the RuvAB complex. RuvB forms 2 homohexamers on either side of HJ DNA bound by 1 or 2 RuvA tetramers; 4 subunits per hexamer contact DNA at a time. Coordinated motions by a converter formed by DNA-disengaged RuvB subunits stimulates ATP hydrolysis and nucleotide exchange. Immobilization of the converter enables RuvB to convert the ATP-contained energy into a lever motion, pulling 2 nucleotides of DNA out of the RuvA tetramer per ATP hydrolyzed, thus driving DNA branch migration. The RuvB motors rotate together with the DNA substrate, which together with the progressing nucleotide cycle form the mechanistic basis for DNA recombination by continuous HJ branch migration. Branch migration allows RuvC to scan DNA until it finds its consensus sequence, where it cleaves and resolves cruciform DNA. This chain is Holliday junction branch migration complex subunit RuvB, found in Rickettsia peacockii (strain Rustic).